We begin with the raw amino-acid sequence, 202 residues long: Crossover junction endodeoxyribonuclease RuvC (202 aa).

Residues aspartate 7, glutamate 68, and aspartate 141 contribute to the active site. Mg(2+) contacts are provided by aspartate 7, glutamate 68, and aspartate 141.

The protein belongs to the RuvC family. In terms of assembly, homodimer which binds Holliday junction (HJ) DNA. The HJ becomes 2-fold symmetrical on binding to RuvC with unstacked arms; it has a different conformation from HJ DNA in complex with RuvA. In the full resolvosome a probable DNA-RuvA(4)-RuvB(12)-RuvC(2) complex forms which resolves the HJ. The cofactor is Mg(2+).

The protein localises to the cytoplasm. The catalysed reaction is Endonucleolytic cleavage at a junction such as a reciprocal single-stranded crossover between two homologous DNA duplexes (Holliday junction).. Its function is as follows. The RuvA-RuvB-RuvC complex processes Holliday junction (HJ) DNA during genetic recombination and DNA repair. Endonuclease that resolves HJ intermediates. Cleaves cruciform DNA by making single-stranded nicks across the HJ at symmetrical positions within the homologous arms, yielding a 5'-phosphate and a 3'-hydroxyl group; requires a central core of homology in the junction. The consensus cleavage sequence is 5'-(A/T)TT(C/G)-3'. Cleavage occurs on the 3'-side of the TT dinucleotide at the point of strand exchange. HJ branch migration catalyzed by RuvA-RuvB allows RuvC to scan DNA until it finds its consensus sequence, where it cleaves and resolves the cruciform DNA. The protein is Crossover junction endodeoxyribonuclease RuvC of Clavibacter michiganensis subsp. michiganensis (strain NCPPB 382).